A 500-amino-acid polypeptide reads, in one-letter code: Glycerol kinase (500 aa).

Thr-12 lines the ADP pocket. 3 residues coordinate ATP: Thr-12, Thr-13, and Ser-14. Thr-12 provides a ligand contact to sn-glycerol 3-phosphate. Arg-16 contributes to the ADP binding site. Sn-glycerol 3-phosphate is bound by residues Arg-82, Glu-83, Tyr-135, and Asp-245. 5 residues coordinate glycerol: Arg-82, Glu-83, Tyr-135, Asp-245, and Gln-246. Thr-267 and Gly-310 together coordinate ADP. ATP contacts are provided by Thr-267, Gly-310, Gln-314, and Gly-411. Residues Gly-411 and Asn-415 each contribute to the ADP site.

This sequence belongs to the FGGY kinase family. Homotetramer and homodimer (in equilibrium).

It catalyses the reaction glycerol + ATP = sn-glycerol 3-phosphate + ADP + H(+). It functions in the pathway polyol metabolism; glycerol degradation via glycerol kinase pathway; sn-glycerol 3-phosphate from glycerol: step 1/1. Its activity is regulated as follows. Activated by phosphorylation and inhibited by fructose 1,6-bisphosphate (FBP). In terms of biological role, key enzyme in the regulation of glycerol uptake and metabolism. Catalyzes the phosphorylation of glycerol to yield sn-glycerol 3-phosphate. This Clostridium perfringens (strain SM101 / Type A) protein is Glycerol kinase.